Reading from the N-terminus, the 139-residue chain is MLMPKRVKYRKTQRGRMKGNSGRGTDVSFGSFGLKAIEPAWITSRQIEAARVAMTRFMKRDGKIWIRIFPDKPVTKKPAETRMGSGKGSPEFWVAVVKPGRIMFEADGVPKEVATEAFRLAAKKLPIKTRFIVRPDYED.

Over residues 1 to 17 (MLMPKRVKYRKTQRGRM) the composition is skewed to basic residues. Residues 1 to 24 (MLMPKRVKYRKTQRGRMKGNSGRG) form a disordered region.

This sequence belongs to the universal ribosomal protein uL16 family. As to quaternary structure, part of the 50S ribosomal subunit.

Functionally, binds 23S rRNA and is also seen to make contacts with the A and possibly P site tRNAs. This chain is Large ribosomal subunit protein uL16, found in Pelodictyon phaeoclathratiforme (strain DSM 5477 / BU-1).